A 119-amino-acid chain; its full sequence is Beta-2-microglobulin (119 aa).

A signal peptide spans 1–20 (MARFVVVPLLVLVSLFGLEA). Positions 25–114 (PKIQVYSRYP…VTFSTPKTVK (90 aa)) constitute an Ig-like C1-type domain. Cysteine 45 and cysteine 100 are joined by a disulfide.

Belongs to the beta-2-microglobulin family. As to quaternary structure, heterodimer of an alpha chain and a beta chain. Beta-2-microglobulin is the beta-chain of major histocompatibility complex class I molecules.

The protein resides in the secreted. Functionally, component of the class I major histocompatibility complex (MHC). Involved in the presentation of peptide antigens to the immune system. The sequence is that of Beta-2-microglobulin (B2M) from Saguinus oedipus (Cotton-top tamarin).